The sequence spans 151 residues: Globin CTT-X (151 aa).

Positions 6 to 150 (TLDAHEVEQV…AFSVIFEVLE (145 aa)) constitute a Globin domain. Heme b-binding residues include His64 and His99.

The protein belongs to the globin family. As to quaternary structure, homodimer.

The chain is Globin CTT-X (CTT-10) from Chironomus thummi thummi (Midge).